We begin with the raw amino-acid sequence, 787 residues long: Lon protease (787 aa).

The Lon N-terminal domain occupies 12–210 (LPLIPLRGLA…LIYSILLEEI (199 aa)). Position 362–369 (362–369 (GPPGTGKT)) interacts with ATP. The Lon proteolytic domain maps to 599-780 (NPQIGLVNGL…DEVLEQALLK (182 aa)). Catalysis depends on residues S686 and K729.

It belongs to the peptidase S16 family. Homohexamer. Organized in a ring with a central cavity.

It is found in the cytoplasm. The catalysed reaction is Hydrolysis of proteins in presence of ATP.. In terms of biological role, ATP-dependent serine protease that mediates the selective degradation of mutant and abnormal proteins as well as certain short-lived regulatory proteins. Required for cellular homeostasis and for survival from DNA damage and developmental changes induced by stress. Degrades polypeptides processively to yield small peptide fragments that are 5 to 10 amino acids long. Binds to DNA in a double-stranded, site-specific manner. The polypeptide is Lon protease (Clostridioides difficile (strain 630) (Peptoclostridium difficile)).